The chain runs to 540 residues: MSKFSSKNINKTKVPESPVVLAILDGWGHREENLDNAIKNANTPIMDSLWHAYPHTLINASGADVGLPNGQMGNSEVGHLTIGSGRIIQQELVRITNVVKNNQLTQVNELKEMANSIKKKKGTLHITGLCSDGGVHSHIDHLLGLIKWASEEHIEKVAIHIITDGRDTPAKSAYKYIRQIEDCIKKFKVGEIASICGRYWIMDRNLIWERTEKAFVNLTDPNGKKIDISPADYLNKSYNANITDEFLEPIRISKDFLKDEDSLICFNFRPDRARQIIKALSEKEFDNFKRKSIPDVDILTFTQYEANLPVKIAFPPESLNNFIGQIVSENGLKQYRTAETEKYPHVTYFFNGGVEVPSPGEQRHLIPSPRVATYDMAPEMSAEELTISCSNAIKTGQYSFVVINFANPDMVGHTGNMAAAIKAIETVDRCIGKIVNATGEMGGSILITADHGNAELMKGPDGEPWTAHTINKVPLIFIEGEKRKIPNMGNEIYLRENAGLADIAPTLLQLLNLPIPKEMTGKSLIKEIELKGFNKVVQHV.

Residues Asp25 and Ser75 each contribute to the Mn(2+) site. Catalysis depends on Ser75, which acts as the Phosphoserine intermediate. Substrate is bound by residues His136, Arg166–Asp167, Arg198, Arg204, Arg269–Arg272, and Lys342. Positions 409, 413, 450, 451, and 468 each coordinate Mn(2+).

Belongs to the BPG-independent phosphoglycerate mutase family. As to quaternary structure, monomer. Mn(2+) is required as a cofactor.

It catalyses the reaction (2R)-2-phosphoglycerate = (2R)-3-phosphoglycerate. It functions in the pathway carbohydrate degradation; glycolysis; pyruvate from D-glyceraldehyde 3-phosphate: step 3/5. Functionally, catalyzes the interconversion of 2-phosphoglycerate and 3-phosphoglycerate. This chain is 2,3-bisphosphoglycerate-independent phosphoglycerate mutase, found in Prochlorococcus marinus subsp. pastoris (strain CCMP1986 / NIES-2087 / MED4).